The primary structure comprises 158 residues: MNTIAPNLDGKHLRIGIVQARFTNEIGSEMLKVCCRTLQELGVADENITVATVPGALEIPIALMNFASSEKFDALIAIGVVIRGETYHFELVSNESGAGVSRVALDYNIPIANAVLTTENDAQAIERIEEKASDAAKVAVECANLVNLLLEEQFEDEE.

5-amino-6-(D-ribitylamino)uracil is bound by residues Phe22, 56–58 (ALE), and 80–82 (VVI). 85 to 86 (ET) serves as a coordination point for (2S)-2-hydroxy-3-oxobutyl phosphate. His88 (proton donor) is an active-site residue. Asn113 contacts 5-amino-6-(D-ribitylamino)uracil. Residue Arg127 participates in (2S)-2-hydroxy-3-oxobutyl phosphate binding.

The protein belongs to the DMRL synthase family.

It catalyses the reaction (2S)-2-hydroxy-3-oxobutyl phosphate + 5-amino-6-(D-ribitylamino)uracil = 6,7-dimethyl-8-(1-D-ribityl)lumazine + phosphate + 2 H2O + H(+). The protein operates within cofactor biosynthesis; riboflavin biosynthesis; riboflavin from 2-hydroxy-3-oxobutyl phosphate and 5-amino-6-(D-ribitylamino)uracil: step 1/2. Its function is as follows. Catalyzes the formation of 6,7-dimethyl-8-ribityllumazine by condensation of 5-amino-6-(D-ribitylamino)uracil with 3,4-dihydroxy-2-butanone 4-phosphate. This is the penultimate step in the biosynthesis of riboflavin. The polypeptide is 6,7-dimethyl-8-ribityllumazine synthase (Neisseria meningitidis serogroup C (strain 053442)).